Here is a 380-residue protein sequence, read N- to C-terminus: MSNTAGQVIKCRAAVAWEAGKPLVIEEVEVAPPQAGEVRLKILFTSLCHTDVYFWEAKGQTPLFPRIFGHEAGGIVESVGEGVTHLKPGDHALPVFTGECGECPHCKSEESNMCNLLRINTDRGVMINDNKSRFSIKGQPVHHFVGTSTFSEYTVVHAGCVAKINPDAPLDKVCILSCGICTGLGATVNVAKPKPGSSVAIFGLGAVGLAAAEGARMSGASRIIGVDLVSSRFELAKKFGVNEFVNPKDHDKPVQQVIAEMTDGGVDRAVECTGSIQAMISAFECVHDGWGVAVLVGVPKKDDAFKTHPMNFLNERTLKGTFYGNYKPRTDLPNVVEQYMKGELELEKFITHSIPFSEINKAFDYMLKGESIRCIIRMEE.

The Zn(2+) site is built by Cys48, Thr50, His70, Cys100, Cys103, Cys106, Cys114, and Cys178. An alcohol is bound by residues Thr50 and His70. Thr50 contacts NAD(+). NAD(+) is bound by residues Gly203–Gly208, Asp227, Arg232, Thr273, Val296, Val296–Val298, and Arg373.

This sequence belongs to the zinc-containing alcohol dehydrogenase family. As to quaternary structure, homodimer. Zn(2+) serves as cofactor.

The protein resides in the cytoplasm. It catalyses the reaction a primary alcohol + NAD(+) = an aldehyde + NADH + H(+). It carries out the reaction a secondary alcohol + NAD(+) = a ketone + NADH + H(+). In Trifolium repens (Creeping white clover), this protein is Alcohol dehydrogenase 1 (ADH1).